Here is a 316-residue protein sequence, read N- to C-terminus: MIGRVDVKAWGKVVVLMGGYSAEREISLKSGTAVLQSLLRQGIEAHGIDVDKGVLTQLSKGQFTRAFIALHGRGGEDGVIQGVLETLNLPYTGSGVLGSALTMDKLRSKRLWRGMDLPTADFSVLTRDTNPALIAADLGLPLIVKPAREGSSLGMMKVESIEALQSAYREAVIFDTAVFAERWLPGAEYTAAILADRVLPLIRLETPRVFYDFEAKYHANTTRYFCPCGLSEKQEQDLQALALEAFQALGASGWGRVDLRCDEKAHPYLLEINTVPGMTDHSLVPMAAQAAGIEFDEMVLQILASSLERRMFQDGT.

The ATP-grasp domain occupies 109–304 (KRLWRGMDLP…FDEMVLQILA (196 aa)). 135 to 190 (AADLGLPLIVKPAREGSSLGMMKVESIEALQSAYREAVIFDTAVFAERWLPGAEYT) lines the ATP pocket. 3 residues coordinate Mg(2+): D258, E271, and N273.

Belongs to the D-alanine--D-alanine ligase family. The cofactor is Mg(2+). Mn(2+) is required as a cofactor.

Its subcellular location is the cytoplasm. It catalyses the reaction 2 D-alanine + ATP = D-alanyl-D-alanine + ADP + phosphate + H(+). The protein operates within cell wall biogenesis; peptidoglycan biosynthesis. Functionally, cell wall formation. This chain is D-alanine--D-alanine ligase, found in Nitrosococcus oceani (strain ATCC 19707 / BCRC 17464 / JCM 30415 / NCIMB 11848 / C-107).